A 735-amino-acid chain; its full sequence is Type-3 glutamine synthetase (735 aa).

One can recognise a GS beta-grasp domain in the interval 89-183; sequence THYCHWFLPL…IPTAFCSWTG (95 aa). The 434-residue stretch at 188-621 folds into the GS catalytic domain; the sequence is QKTPLLRSME…SLYDLVSTLV (434 aa).

The protein belongs to the glutamine synthetase family. Type 3 subfamily. Homohexamer.

It carries out the reaction L-glutamate + NH4(+) + ATP = L-glutamine + ADP + phosphate + H(+). The polypeptide is Type-3 glutamine synthetase (glnA3) (Dictyostelium discoideum (Social amoeba)).